The sequence spans 270 residues: Formamidopyrimidine-DNA glycosylase (270 aa).

The active-site Schiff-base intermediate with DNA is Pro2. Glu3 serves as the catalytic Proton donor. The active-site Proton donor; for beta-elimination activity is Lys58. Residues His91, Arg110, and Arg151 each coordinate DNA. Residues 236 to 270 (LVYGRDGLPCPNCGRALKHATIGQRASVWCSHCQR) form an FPG-type zinc finger. The active-site Proton donor; for delta-elimination activity is Arg260.

Belongs to the FPG family. Monomer. Zn(2+) serves as cofactor.

The enzyme catalyses Hydrolysis of DNA containing ring-opened 7-methylguanine residues, releasing 2,6-diamino-4-hydroxy-5-(N-methyl)formamidopyrimidine.. It carries out the reaction 2'-deoxyribonucleotide-(2'-deoxyribose 5'-phosphate)-2'-deoxyribonucleotide-DNA = a 3'-end 2'-deoxyribonucleotide-(2,3-dehydro-2,3-deoxyribose 5'-phosphate)-DNA + a 5'-end 5'-phospho-2'-deoxyribonucleoside-DNA + H(+). Involved in base excision repair of DNA damaged by oxidation or by mutagenic agents. Acts as a DNA glycosylase that recognizes and removes damaged bases. Has a preference for oxidized purines, such as 7,8-dihydro-8-oxoguanine (8-oxoG). Has AP (apurinic/apyrimidinic) lyase activity and introduces nicks in the DNA strand. Cleaves the DNA backbone by beta-delta elimination to generate a single-strand break at the site of the removed base with both 3'- and 5'-phosphates. The sequence is that of Formamidopyrimidine-DNA glycosylase from Stenotrophomonas maltophilia (strain K279a).